Consider the following 544-residue polypeptide: CTP synthase (544 aa).

Residues 1 to 266 (MTKFIFVTGG…DDLICERFGL (266 aa)) form an amidoligase domain region. Position 13 (Ser13) interacts with CTP. Ser13 contacts UTP. ATP contacts are provided by residues 14-19 (SLGKGI) and Asp71. Mg(2+)-binding residues include Asp71 and Glu140. CTP-binding positions include 147–149 (DIE), 187–192 (KTKPTQ), and Lys223. Residues 187–192 (KTKPTQ) and Lys223 contribute to the UTP site. A Glutamine amidotransferase type-1 domain is found at 291 to 543 (TVAMVGKYVE…VKAAKNYSEA (253 aa)). Gly354 serves as a coordination point for L-glutamine. Cys381 (nucleophile; for glutamine hydrolysis) is an active-site residue. Residues 382-385 (LGMQ), Glu404, and Arg471 contribute to the L-glutamine site. Residues His516 and Glu518 contribute to the active site.

The protein belongs to the CTP synthase family. As to quaternary structure, homotetramer.

The catalysed reaction is UTP + L-glutamine + ATP + H2O = CTP + L-glutamate + ADP + phosphate + 2 H(+). It carries out the reaction L-glutamine + H2O = L-glutamate + NH4(+). It catalyses the reaction UTP + NH4(+) + ATP = CTP + ADP + phosphate + 2 H(+). Its pathway is pyrimidine metabolism; CTP biosynthesis via de novo pathway; CTP from UDP: step 2/2. Allosterically activated by GTP, when glutamine is the substrate; GTP has no effect on the reaction when ammonia is the substrate. The allosteric effector GTP functions by stabilizing the protein conformation that binds the tetrahedral intermediate(s) formed during glutamine hydrolysis. Inhibited by the product CTP, via allosteric rather than competitive inhibition. Functionally, catalyzes the ATP-dependent amination of UTP to CTP with either L-glutamine or ammonia as the source of nitrogen. Regulates intracellular CTP levels through interactions with the four ribonucleotide triphosphates. The sequence is that of CTP synthase from Psychrobacter cryohalolentis (strain ATCC BAA-1226 / DSM 17306 / VKM B-2378 / K5).